Reading from the N-terminus, the 445-residue chain is Phosphoglucosamine mutase (445 aa).

The active-site Phosphoserine intermediate is S102. Residues S102, D241, D243, and D245 each coordinate Mg(2+). At S102 the chain carries Phosphoserine.

This sequence belongs to the phosphohexose mutase family. Requires Mg(2+) as cofactor. Activated by phosphorylation.

It carries out the reaction alpha-D-glucosamine 1-phosphate = D-glucosamine 6-phosphate. Its function is as follows. Catalyzes the conversion of glucosamine-6-phosphate to glucosamine-1-phosphate. This chain is Phosphoglucosamine mutase, found in Aliivibrio fischeri (strain ATCC 700601 / ES114) (Vibrio fischeri).